The chain runs to 367 residues: Queuine tRNA-ribosyltransferase (367 aa).

The active-site Proton acceptor is D89. Substrate-binding positions include 89–93 (DSGGF), D143, Q185, and G212. Residues 243-249 (GVGTPSD) form an RNA binding region. Residue D262 is the Nucleophile of the active site. Residues 267-271 (TRNAR) form an RNA binding; important for wobble base 34 recognition region. Zn(2+) contacts are provided by C300, C302, C305, and H331.

Belongs to the queuine tRNA-ribosyltransferase family. In terms of assembly, homodimer. Within each dimer, one monomer is responsible for RNA recognition and catalysis, while the other monomer binds to the replacement base PreQ1. The cofactor is Zn(2+).

It carries out the reaction 7-aminomethyl-7-carbaguanine + guanosine(34) in tRNA = 7-aminomethyl-7-carbaguanosine(34) in tRNA + guanine. It functions in the pathway tRNA modification; tRNA-queuosine biosynthesis. In terms of biological role, catalyzes the base-exchange of a guanine (G) residue with the queuine precursor 7-aminomethyl-7-deazaguanine (PreQ1) at position 34 (anticodon wobble position) in tRNAs with GU(N) anticodons (tRNA-Asp, -Asn, -His and -Tyr). Catalysis occurs through a double-displacement mechanism. The nucleophile active site attacks the C1' of nucleotide 34 to detach the guanine base from the RNA, forming a covalent enzyme-RNA intermediate. The proton acceptor active site deprotonates the incoming PreQ1, allowing a nucleophilic attack on the C1' of the ribose to form the product. After dissociation, two additional enzymatic reactions on the tRNA convert PreQ1 to queuine (Q), resulting in the hypermodified nucleoside queuosine (7-(((4,5-cis-dihydroxy-2-cyclopenten-1-yl)amino)methyl)-7-deazaguanosine). This Thiobacillus denitrificans (strain ATCC 25259 / T1) protein is Queuine tRNA-ribosyltransferase.